The sequence spans 406 residues: Tryptophan 2,3-dioxygenase A (406 aa).

Substrate is bound by residues 71-75 and Arg143; that span reads FIVTH. Residue His327 participates in heme binding. Position 341 (Thr341) interacts with substrate.

This sequence belongs to the tryptophan 2,3-dioxygenase family. Homotetramer. Dimer of dimers. Requires heme as cofactor.

It catalyses the reaction L-tryptophan + O2 = N-formyl-L-kynurenine. Its pathway is amino-acid degradation; L-tryptophan degradation via kynurenine pathway; L-kynurenine from L-tryptophan: step 1/2. Functionally, heme-dependent dioxygenase that catalyzes the oxidative cleavage of the L-tryptophan (L-Trp) pyrrole ring and converts L-tryptophan to N-formyl-L-kynurenine. Catalyzes the oxidative cleavage of the indole moiety. In Danio rerio (Zebrafish), this protein is Tryptophan 2,3-dioxygenase A.